Here is a 1984-residue protein sequence, read N- to C-terminus: Sodium channel protein type 9 subunit alpha (1984 aa).

The Cytoplasmic segment spans residues 1 to 125 (MAMLPPPGPQ…RRISIKILVH (125 aa)). Basic and acidic residues predominate over residues 26-39 (RISEEKAKGHKDEK). The segment at 26-55 (RISEEKAKGHKDEKKDDEEEGPKPSSDLEA) is disordered. Residues 112 to 410 (FSPLRRISIK…VAMAYEEQNQ (299 aa)) form an I repeat. Residues 126-145 (SLFSMLIMCTILTNCIFMTM) form a helical membrane-spanning segment. Over 146 to 150 (SNPPD) the chain is Extracellular. The chain crosses the membrane as a helical span at residues 151–172 (WTKNVEYTFTGIYTFESLIKIL). At 173-185 (ARGFCVGEFTFLR) the chain is on the cytoplasmic side. Residues 186-204 (DPWNWLDFVVIVFAYLTEF) traverse the membrane as a helical segment. Over 205–210 (VNLGNV) the chain is Extracellular. Residues 211-227 (SALRTFRVLRALKTISV) traverse the membrane as a helical segment. Over 228–241 (IPGLKTIVGALIQS) the chain is Cytoplasmic. A helical transmembrane segment spans residues 242 to 267 (VKKLSDVMILTVFCLSVFALIGLQLF). The Extracellular portion of the chain corresponds to 268–346 (MGNLKHKCFR…PDYGYTSFDT (79 aa)). Cys-275 and Cys-324 are disulfide-bonded. Positions 347–363 (FGWAFLALFRLMTQDYW) form an intramembrane region, pore-forming. At 364–376 (ENLYQQTLRAAGK) the chain is on the extracellular side. The chain crosses the membrane as a helical span at residues 377 to 402 (TYMIFFVVVIFLGSFYLINLILAVVA). The stretch at 402–449 (AMAYEEQNQANIEEAKQKELEFQQMLDRLKKEQEEAEAIAAAAAEYTS) forms a coiled coil. Over 403–744 (MAYEEQNQAN…FIYFIVMDPF (342 aa)) the chain is Cytoplasmic. Over residues 458 to 471 (LSESSSETSRLSSK) the composition is skewed to low complexity. 2 disordered regions span residues 458–540 (LSES…SIRG) and 574–609 (HSIF…RSPP). The segment covering 474 to 486 (KERRNRRKKKKQK) has biased composition (basic residues). 2 stretches are compositionally biased toward basic and acidic residues: residues 489–509 (SGEE…ESIR) and 574–584 (HSIFGDNESRR). Residues 684–708 (LRQRAMSRASILTNTVEELEESRQK) adopt a coiled-coil conformation. Residues 725–988 (CSPYWIKFKK…EEDTDANNLQ (264 aa)) form an II repeat. A helical membrane pass occupies residues 745–761 (VDLAITICIVLNTLFMA). Residues 762–770 (MEHHPMTDE) are Extracellular-facing. Residues 771 to 795 (FKNVLAVGNLVFTGIFAAEMVLKLI) traverse the membrane as a helical segment. Over 796 to 804 (AMDPYEYFQ) the chain is Cytoplasmic. Residues 805–821 (VGWNIFDSLIVTLSLVE) form a helical membrane-spanning segment. The Extracellular portion of the chain corresponds to 822–830 (LFLADVEGL). Residues 831–847 (SVLRSFRLLRVFKLAKS) traverse the membrane as a helical segment. Topologically, residues 848 to 864 (WPTLNMLIKIIGNSVGA) are cytoplasmic. A helical transmembrane segment spans residues 865–887 (LGNLTLVLAIIVFIFAVVGMQLF). At 888-914 (GKSYKECVCKINENCKLPRWHMNDFFH) the chain is on the extracellular side. Cys-896 and Cys-902 are oxidised to a cystine. Residues 915-927 (SFLIVFRVLCGEW) constitute an intramembrane region (pore-forming). Topologically, residues 928 to 939 (IETMWDCMEVAG) are extracellular. Cys-934 and Cys-943 are disulfide-bonded. A helical membrane pass occupies residues 940 to 966 (QTMCLIVYMMVMVIGNLVVLNLFLALL). Over 967 to 1185 (LSSFSSDNLT…WWTIRKTCYR (219 aa)) the chain is Cytoplasmic. Disordered stretches follow at residues 1015–1039 (KKPK…YISN) and 1089–1145 (PIAP…EPIN). Over residues 1019–1035 (GSKDTKRTADPNNKREN) the composition is skewed to basic and acidic residues. Acidic residues predominate over residues 1135–1145 (GEEEAEAEPIN). Residues 1178-1486 (TIRKTCYRIV…KKYYNAMKKL (309 aa)) form an III repeat. Residues 1186–1210 (IVEHSWFESFIVLMILLSSGALAFE) traverse the membrane as a helical segment. Residues 1211–1222 (DIYIEKKKTIKI) lie on the Extracellular side of the membrane. Residues 1223 to 1248 (ILEYADKIFTYIFILEMLLKWVAYGY) form a helical membrane-spanning segment. At 1249-1250 (KT) the chain is on the cytoplasmic side. A helical membrane pass occupies residues 1251 to 1276 (YFTNAWCWLDFLIVDVSLVTLVANTL). Residues 1277 to 1285 (GYSDLGPIK) lie on the Extracellular side of the membrane. A helical membrane pass occupies residues 1286–1302 (SLRTLRALRPLRALSRF). Residues 1303-1315 (EGMRVVVNALIGA) are Cytoplasmic-facing. Residues 1316–1340 (IPSIMNVLLVCLIFWLIFSIMGVNL) form a helical membrane-spanning segment. Residues 1341–1392 (FAGKFYECVNTTDGSRFSVSQVANRSECFALMNVSGNVRWKNLKVNFDNVGL) are Extracellular-facing. Cys-1348 and Cys-1368 are disulfide-bonded. An intramembrane region (pore-forming) is located at residues 1393–1403 (GYLSLLQVATF). Topologically, residues 1404 to 1429 (KGWMDIMYAAVDSVNVNAQPIYEYNL) are extracellular. Residues 1430–1455 (YMYIYFVIFIIFGSFFTLNLFIGVII) form a helical membrane-spanning segment. Residues 1456–1512 (DNFNQQKKKLGGQDIFMTEEQKKYYNAMKKLGSKKPQKPIPRPGNKFQGCIFDLVTN) are Cytoplasmic-facing. At Ser-1488 the chain carries Phosphoserine; by PKC. The stretch at 1495-1793 (IPRPGNKFQG…WEKFDPDATQ (299 aa)) is one IV repeat. Residues 1513–1532 (QAFDITIMVLICLNMVTMMV) traverse the membrane as a helical segment. At 1533-1543 (EKEGQTDYMSF) the chain is on the extracellular side. The chain crosses the membrane as a helical span at residues 1544–1565 (VLYWINVVFIILFTGECVLKLI). The Cytoplasmic segment spans residues 1566–1574 (SLRHYYFTV). A helical transmembrane segment spans residues 1575-1596 (GWNIFDFVVVILSIVGMFLAEM). Residues 1597–1605 (IEKYFVSPT) are Extracellular-facing. The helical transmembrane segment at 1606–1625 (LFRVIRLARIGRILRLIKGA) threads the bilayer. The Cytoplasmic portion of the chain corresponds to 1626–1638 (KGIRTLLFALMMS). The helical transmembrane segment at 1639-1661 (LPALFNIGLLLFLVMFIYAIFGM) threads the bilayer. Over 1662–1684 (SNFAYVKKEAGINDMFNFETFGN) the chain is Extracellular. The segment at residues 1685–1697 (SMICLFQITTSAG) is an intramembrane region (pore-forming). Over 1698-1731 (WDGLLAPILNSAPPDCDPKKVHPGSSVEGDCGNP) the chain is Extracellular. The cysteines at positions 1713 and 1728 are disulfide-linked. The chain crosses the membrane as a helical span at residues 1732-1757 (SVGIFYFVSYIIISFLVVVNMYIAVI). At 1758 to 1984 (LENFSVATEE…EDKEKDESRK (227 aa)) the chain is on the cytoplasmic side. In terms of domain architecture, IQ spans 1887-1916 (EDVSATIIQRAYRRYRLRQNVKNISSIYIK). The tract at residues 1933–1984 (DNVNENSSPEKTDATASTISPPSYDSVTKPDQEKYETDKTEKEDKEKDESRK) is disordered. Polar residues predominate over residues 1946-1958 (ATASTISPPSYDS). A compositionally biased stretch (basic and acidic residues) spans 1960-1984 (TKPDQEKYETDKTEKEDKEKDESRK).

The protein belongs to the sodium channel (TC 1.A.1.10) family. Nav1.7/SCN9A subfamily. In terms of assembly, the Nav1.7 voltage-gated sodium channel consists of an ion-conducting alpha subunit SCN9A which is functional on its own regulated by one or more beta-1 (SCN1B), beta-2 (SCN2B), beta-3 (SCN3B) and beta-4 (SCN4B) subunits. SCN1B and SCN3B are non-covalently associated with SCN9A. SCN2B and SCN4B are disulfide-linked to SCN9A. SCN1B regulates channel inactivation. Interacts with NEDD4 and NEDD4L; regulates Nav1.7 activity most probably through ubiquitination and subsequent endocytosis. Interacts with TMEM233; modulates the gating properties of NaV1.7. Ubiquitinated by NEDD4L; which may promote its endocytosis. Post-translationally, phosphorylation at Ser-1488 by PKC in a highly conserved cytoplasmic loop increases peak sodium currents. In terms of tissue distribution, expressed strongly in sciatic nerves, with moderate levels in kidney. Not detected in liver, brain and muscle.

The protein localises to the cell membrane. It is found in the cell projection. The protein resides in the neuron projection. Its subcellular location is the axon. It catalyses the reaction Na(+)(in) = Na(+)(out). Pore-forming subunit of Nav1.7, a voltage-gated sodium (Nav) channel that directly mediates the depolarizing phase of action potentials in excitable membranes. Navs, also called VGSCs (voltage-gated sodium channels) or VDSCs (voltage-dependent sodium channels), operate by switching between closed and open conformations depending on the voltage difference across the membrane. In the open conformation they allow Na(+) ions to selectively pass through the pore, along their electrochemical gradient. The influx of Na(+) ions provokes membrane depolarization, initiating the propagation of electrical signals throughout cells and tissues. Nav1.7 plays a crucial role in controlling the excitability and action potential propagation from nociceptor neurons, thereby contributing to the sensory perception of pain. The chain is Sodium channel protein type 9 subunit alpha from Mus musculus (Mouse).